The chain runs to 198 residues: Phage-like element PBSX protein XkdA (198 aa).

It to B.subtilis YqaB.

This is Phage-like element PBSX protein XkdA (xkdA) from Bacillus subtilis (strain 168).